A 428-amino-acid polypeptide reads, in one-letter code: Trigger factor (428 aa).

The PPIase FKBP-type domain occupies 163 to 248 (GNIAVIDFKG…VKEIKVKELP (86 aa)).

Belongs to the FKBP-type PPIase family. Tig subfamily.

It is found in the cytoplasm. The catalysed reaction is [protein]-peptidylproline (omega=180) = [protein]-peptidylproline (omega=0). Involved in protein export. Acts as a chaperone by maintaining the newly synthesized protein in an open conformation. Functions as a peptidyl-prolyl cis-trans isomerase. This is Trigger factor from Clostridium perfringens (strain ATCC 13124 / DSM 756 / JCM 1290 / NCIMB 6125 / NCTC 8237 / Type A).